The primary structure comprises 71 residues: ATP synthase subunit c (71 aa).

Helical transmembrane passes span Ala5–Val25 and Phe47–Leu67.

It belongs to the ATPase C chain family. F-type ATPases have 2 components, F(1) - the catalytic core - and F(0) - the membrane proton channel. F(1) has five subunits: alpha(3), beta(3), gamma(1), delta(1), epsilon(1). F(0) has three main subunits: a(1), b(2) and c(10-14). The alpha and beta chains form an alternating ring which encloses part of the gamma chain. F(1) is attached to F(0) by a central stalk formed by the gamma and epsilon chains, while a peripheral stalk is formed by the delta and b chains.

The protein resides in the cell membrane. Its function is as follows. F(1)F(0) ATP synthase produces ATP from ADP in the presence of a proton or sodium gradient. F-type ATPases consist of two structural domains, F(1) containing the extramembraneous catalytic core and F(0) containing the membrane proton channel, linked together by a central stalk and a peripheral stalk. During catalysis, ATP synthesis in the catalytic domain of F(1) is coupled via a rotary mechanism of the central stalk subunits to proton translocation. In terms of biological role, key component of the F(0) channel; it plays a direct role in translocation across the membrane. A homomeric c-ring of between 10-14 subunits forms the central stalk rotor element with the F(1) delta and epsilon subunits. This Shouchella clausii (strain KSM-K16) (Alkalihalobacillus clausii) protein is ATP synthase subunit c.